The primary structure comprises 443 residues: Flagellum-specific ATP synthase (443 aa).

169 to 176 (AGAGVGKS) contacts ATP.

It belongs to the ATPase alpha/beta chains family.

It localises to the cytoplasm. The catalysed reaction is ATP + H2O + 4 H(+)(in) = ADP + phosphate + 5 H(+)(out). Functionally, probable catalytic subunit of a protein translocase for flagellum-specific export, or a proton translocase involved in local circuits at the flagellum. This chain is Flagellum-specific ATP synthase (fliI), found in Aquifex aeolicus (strain VF5).